Here is a 70-residue protein sequence, read N- to C-terminus: NADH dehydrogenase [ubiquinone] 1 alpha subcomplex subunit 1 (70 aa).

A helical transmembrane segment spans residues 1-21 (MWFEILPGLSVMGVCLLIPGL).

The protein belongs to the complex I NDUFA1 subunit family. In terms of assembly, complex I is composed of 45 different subunits. As to expression, primarily expressed in heart and skeletal muscle.

The protein localises to the mitochondrion inner membrane. Functionally, accessory subunit of the mitochondrial membrane respiratory chain NADH dehydrogenase (Complex I), that is believed not to be involved in catalysis. Complex I functions in the transfer of electrons from NADH to the respiratory chain. The immediate electron acceptor for the enzyme is believed to be ubiquinone. The chain is NADH dehydrogenase [ubiquinone] 1 alpha subcomplex subunit 1 (NDUFA1) from Homo sapiens (Human).